The chain runs to 456 residues: Bifunctional protein GlmU (456 aa).

Residues 1–229 (MLNNAMSVVI…LSEVEGVNNR (229 aa)) form a pyrophosphorylase region. UDP-N-acetyl-alpha-D-glucosamine is bound by residues 11–14 (LAAG), lysine 25, glutamine 76, 81–82 (GT), 103–105 (YGD), glycine 140, glutamate 154, asparagine 169, and asparagine 227. Residue aspartate 105 coordinates Mg(2+). Residue asparagine 227 coordinates Mg(2+). Positions 230-250 (LQLSRLERVYQSEQAEKLLLA) are linker. The tract at residues 251 to 456 (GVMLRDPARF…EGWRRPVKKK (206 aa)) is N-acetyltransferase. Residues arginine 333 and lysine 351 each contribute to the UDP-N-acetyl-alpha-D-glucosamine site. The Proton acceptor role is filled by histidine 363. Tyrosine 366 and asparagine 377 together coordinate UDP-N-acetyl-alpha-D-glucosamine. Acetyl-CoA is bound by residues alanine 380, 386–387 (NY), serine 405, alanine 423, and arginine 440.

In the N-terminal section; belongs to the N-acetylglucosamine-1-phosphate uridyltransferase family. It in the C-terminal section; belongs to the transferase hexapeptide repeat family. In terms of assembly, homotrimer. Mg(2+) is required as a cofactor.

The protein resides in the cytoplasm. It catalyses the reaction alpha-D-glucosamine 1-phosphate + acetyl-CoA = N-acetyl-alpha-D-glucosamine 1-phosphate + CoA + H(+). The catalysed reaction is N-acetyl-alpha-D-glucosamine 1-phosphate + UTP + H(+) = UDP-N-acetyl-alpha-D-glucosamine + diphosphate. It participates in nucleotide-sugar biosynthesis; UDP-N-acetyl-alpha-D-glucosamine biosynthesis; N-acetyl-alpha-D-glucosamine 1-phosphate from alpha-D-glucosamine 6-phosphate (route II): step 2/2. It functions in the pathway nucleotide-sugar biosynthesis; UDP-N-acetyl-alpha-D-glucosamine biosynthesis; UDP-N-acetyl-alpha-D-glucosamine from N-acetyl-alpha-D-glucosamine 1-phosphate: step 1/1. Its pathway is bacterial outer membrane biogenesis; LPS lipid A biosynthesis. Its function is as follows. Catalyzes the last two sequential reactions in the de novo biosynthetic pathway for UDP-N-acetylglucosamine (UDP-GlcNAc). The C-terminal domain catalyzes the transfer of acetyl group from acetyl coenzyme A to glucosamine-1-phosphate (GlcN-1-P) to produce N-acetylglucosamine-1-phosphate (GlcNAc-1-P), which is converted into UDP-GlcNAc by the transfer of uridine 5-monophosphate (from uridine 5-triphosphate), a reaction catalyzed by the N-terminal domain. This Escherichia coli O139:H28 (strain E24377A / ETEC) protein is Bifunctional protein GlmU.